The sequence spans 31 residues: GTIPCGESCVYIPCLTSALGCSCKNKVCYRN.

A cross-link (cyclopeptide (Gly-Asn)) is located at residues 1–31; that stretch reads GTIPCGESCVYIPCLTSALGCSCKNKVCYRN. Cystine bridges form between cysteine 5/cysteine 21, cysteine 9/cysteine 23, and cysteine 14/cysteine 28.

This sequence belongs to the cyclotide family. Bracelet subfamily. Post-translationally, this is a cyclic peptide.

Its function is as follows. Probably participates in a plant defense mechanism. This chain is Cyclotide mden-N, found in Melicytus dentatus (Tree violet).